The sequence spans 140 residues: Endoribonuclease YbeY (140 aa).

Residues histidine 100, histidine 104, and histidine 110 each coordinate Zn(2+).

The protein belongs to the endoribonuclease YbeY family. Requires Zn(2+) as cofactor.

It is found in the cytoplasm. Single strand-specific metallo-endoribonuclease involved in late-stage 70S ribosome quality control and in maturation of the 3' terminus of the 16S rRNA. This is Endoribonuclease YbeY from Helicobacter pylori (strain ATCC 700392 / 26695) (Campylobacter pylori).